A 202-amino-acid chain; its full sequence is dTTP/UTP pyrophosphatase (202 aa).

Asp-80 acts as the Proton acceptor in catalysis.

Belongs to the Maf family. YhdE subfamily. It depends on a divalent metal cation as a cofactor.

Its subcellular location is the cytoplasm. The catalysed reaction is dTTP + H2O = dTMP + diphosphate + H(+). It carries out the reaction UTP + H2O = UMP + diphosphate + H(+). Nucleoside triphosphate pyrophosphatase that hydrolyzes dTTP and UTP. May have a dual role in cell division arrest and in preventing the incorporation of modified nucleotides into cellular nucleic acids. The chain is dTTP/UTP pyrophosphatase from Alkalilimnicola ehrlichii (strain ATCC BAA-1101 / DSM 17681 / MLHE-1).